The sequence spans 172 residues: Large ribosomal subunit protein uL10 (172 aa).

Belongs to the universal ribosomal protein uL10 family. Part of the ribosomal stalk of the 50S ribosomal subunit. The N-terminus interacts with L11 and the large rRNA to form the base of the stalk. The C-terminus forms an elongated spine to which L12 dimers bind in a sequential fashion forming a multimeric L10(L12)X complex.

Its function is as follows. Forms part of the ribosomal stalk, playing a central role in the interaction of the ribosome with GTP-bound translation factors. The sequence is that of Large ribosomal subunit protein uL10 from Nitrobacter hamburgensis (strain DSM 10229 / NCIMB 13809 / X14).